A 183-amino-acid polypeptide reads, in one-letter code: Type II secretion system protein H (183 aa).

A propeptide spans 1–5 (MRQRG) (leader sequence). At Phe-6 the chain carries N-methylphenylalanine. Residues 6 to 26 (FTVLEMMLVVLLMGSAASLVI) traverse the membrane as a helical segment.

In terms of assembly, type II secretion is composed of four main components: the outer membrane complex, the inner membrane complex, the cytoplasmic secretion ATPase and the periplasm-spanning pseudopilus. Interacts with core component PulG. Interacts with PulM. Post-translationally, cleaved by prepilin peptidase. Methylated by prepilin peptidase at the amino group of the N-terminal phenylalanine once the leader sequence is cleaved by prepilin peptidase.

It localises to the cell inner membrane. Its function is as follows. Component of the type II secretion system required for the energy-dependent secretion of extracellular factors such as proteases and toxins from the periplasm. Part of the pseudopilus tip complex that is critical for the recognition and binding of secretion substrates. This chain is Type II secretion system protein H (pulH), found in Klebsiella michiganensis (strain ATCC 8724 / DSM 4798 / JCM 20051 / NBRC 3318 / NRRL B-199 / KCTC 1686 / BUCSAV 143 / CCM 1901).